A 240-amino-acid chain; its full sequence is 1-(5-phosphoribosyl)-5-[(5-phosphoribosylamino)methylideneamino] imidazole-4-carboxamide isomerase (240 aa).

Aspartate 8 (proton acceptor) is an active-site residue. Aspartate 129 serves as the catalytic Proton donor.

The protein belongs to the HisA/HisF family.

The protein resides in the cytoplasm. It catalyses the reaction 1-(5-phospho-beta-D-ribosyl)-5-[(5-phospho-beta-D-ribosylamino)methylideneamino]imidazole-4-carboxamide = 5-[(5-phospho-1-deoxy-D-ribulos-1-ylimino)methylamino]-1-(5-phospho-beta-D-ribosyl)imidazole-4-carboxamide. It participates in amino-acid biosynthesis; L-histidine biosynthesis; L-histidine from 5-phospho-alpha-D-ribose 1-diphosphate: step 4/9. The chain is 1-(5-phosphoribosyl)-5-[(5-phosphoribosylamino)methylideneamino] imidazole-4-carboxamide isomerase from Dinoroseobacter shibae (strain DSM 16493 / NCIMB 14021 / DFL 12).